Here is a 111-residue protein sequence, read N- to C-terminus: Heavy metal-associated isoprenylated plant protein 10 (111 aa).

The 68-residue stretch at 1-68 (MQETVVFEWG…ICDYVDITAV (68 aa)) folds into the HMA domain. Positions 68 to 111 (VGPEGQPAQNRNPVKKPEPKVIRGRPYPPQKKTPGKNSDECIIL) are disordered. The residue at position 108 (Cys-108) is a Cysteine methyl ester. The S-farnesyl cysteine moiety is linked to residue Cys-108. Positions 109 to 111 (IIL) are cleaved as a propeptide — removed in mature form.

It belongs to the HIPP family.

Probable heavy-metal-binding protein. In Arabidopsis thaliana (Mouse-ear cress), this protein is Heavy metal-associated isoprenylated plant protein 10.